The following is a 174-amino-acid chain: Calcineurin subunit B (174 aa).

4 EF-hand domains span residues 21–56, 60–88, 90–125, and 131–166; these read EEIE…SSNP, RLMD…FSGK, SKLD…MVGK, and ELQQ…KSVA. The Ca(2+) site is built by D34, D36, S38, T40, E45, D66, D68, N70, T72, E77, D103, D105, D107, Y109, E114, D144, D146, D148, R150, and E155.

This sequence belongs to the calcineurin regulatory subunit family. As to quaternary structure, composed of a catalytic subunit (A) and a regulatory subunit (B).

Its function is as follows. Regulatory subunit of calcineurin, a calcium-dependent, calmodulin stimulated protein phosphatase. Confers calcium sensitivity. This is Calcineurin subunit B (CNB1) from Debaryomyces hansenii (strain ATCC 36239 / CBS 767 / BCRC 21394 / JCM 1990 / NBRC 0083 / IGC 2968) (Yeast).